A 392-amino-acid chain; its full sequence is FK506-binding protein 4 (392 aa).

Disordered stretches follow at residues 58–116 (NPEL…NEID) and 161–284 (GNYV…PKTK). Acidic residues-rich tracts occupy residues 73–86 (DGLE…EQEA), 104–116 (SESE…NEID), and 172–219 (SDSD…DASD). Ser-80 and Ser-82 each carry phosphoserine. Composition is skewed to basic and acidic residues over residues 220–234 (IESR…DEKK) and 252–279 (SAKP…ESKP). The 87-residue stretch at 306 to 392 (GTRVGMRYVG…TFDVKLVSMK (87 aa)) folds into the PPIase FKBP-type domain.

It belongs to the FKBP-type PPIase family. FKBP3/4 subfamily. As to quaternary structure, binds to histones H3 and H4. Interacts with NOP53.

The protein resides in the nucleus. The catalysed reaction is [protein]-peptidylproline (omega=180) = [protein]-peptidylproline (omega=0). PPIase that acts as a histone chaperone. Histone proline isomerase that increases the rate of cis-trans isomerization at 'Pro-17' (H3P16), 'Pro-31' (H3P30) and 'Pro-39 (H3P38) on the histone H3 N-terminal tail. H3P16 and H3P30 are the major proline targets with little activity shown against H3P38. H3P38 isomerization influences SET2-mediated H3K36 methylation thereby regulating gene expression. This chain is FK506-binding protein 4, found in Saccharomyces cerevisiae (strain ATCC 204508 / S288c) (Baker's yeast).